An 80-amino-acid chain; its full sequence is Large ribosomal subunit protein bL31B (80 aa).

This sequence belongs to the bacterial ribosomal protein bL31 family. Type B subfamily. In terms of assembly, part of the 50S ribosomal subunit.

This Shouchella clausii (strain KSM-K16) (Alkalihalobacillus clausii) protein is Large ribosomal subunit protein bL31B.